We begin with the raw amino-acid sequence, 109 residues long: U3-lycotoxin-Ls1x (109 aa).

The signal sequence occupies residues 1-20 (MKFVLLFGVLLVTLFSYSSA). Residues 21-44 (EMLDDFDQADEDELLSLIEKEEAR) constitute a propeptide that is removed on maturation. Disulfide bonds link C48–C63, C55–C72, C62–C88, and C74–C86.

The protein belongs to the neurotoxin 19 (CSTX) family. 01 subfamily. As to expression, expressed by the venom gland.

It is found in the secreted. This chain is U3-lycotoxin-Ls1x, found in Lycosa singoriensis (Wolf spider).